Consider the following 884-residue polypeptide: Chondroitin sulfate synthase 3 (884 aa).

At 1-7 the chain is on the cytoplasmic side; the sequence is MAVRSRR. A helical; Signal-anchor for type II membrane protein membrane pass occupies residues 8 to 28; that stretch reads PWVSVALGLVLGFTAASWLIA. The Lumenal portion of the chain corresponds to 29-884; sequence PRVAELSEKR…LGVRDNRTLS (856 aa). The tract at residues 47 to 164 is disordered; sequence YYGRSATGPR…NGSGDGGAAV (118 aa). Composition is skewed to low complexity over residues 60 to 69 and 84 to 96; these read QQLLPQPQSR and PGPQQPEAAPGGP. Asn155 and Asn281 each carry an N-linked (GlcNAc...) asparagine glycan. The interval 437–456 is disordered; that stretch reads SNSEVSKEDQQLGRTPSFNH. A glycan (N-linked (GlcNAc...) asparagine) is linked at Asn712. Positions 722 and 836 each coordinate a divalent metal cation. N-linked (GlcNAc...) asparagine glycosylation is present at Asn880.

The protein belongs to the chondroitin N-acetylgalactosaminyltransferase family. Requires Co(2+) as cofactor. Mn(2+) is required as a cofactor. It depends on Cd(2+) as a cofactor.

The protein resides in the golgi apparatus. It localises to the golgi stack membrane. The enzyme catalyses 3-O-(beta-D-GlcA-(1-&gt;3)-beta-D-GalNAc-(1-&gt;4)-beta-D-GlcA-(1-&gt;3)-beta-D-Gal-(1-&gt;3)-beta-D-Gal-(1-&gt;4)-beta-D-Xyl)-L-seryl-[protein] + UDP-N-acetyl-alpha-D-galactosamine = 3-O-(beta-D-GalNAc-(1-&gt;4)-beta-D-GlcA-(1-&gt;3)-beta-D-GalNAc-(1-&gt;4)-beta-D-GlcA-(1-&gt;3)-beta-D-Gal-(1-&gt;3)-beta-D-Gal-(1-&gt;4)-beta-D-Xyl)-L-seryl-[protein] + UDP + H(+). It catalyses the reaction 3-O-{beta-D-GlcA-(1-&gt;3)-[beta-D-GalNAc-(1-&gt;4)-beta-D-GlcA-(1-&gt;3)](n)-beta-D-GalNAc-(1-&gt;4)-beta-D-GlcA-(1-&gt;3)-beta-D-Gal-(1-&gt;3)-beta-D-Gal-(1-&gt;4)-beta-D-Xyl}-L-seryl-[protein] + UDP-N-acetyl-alpha-D-galactosamine = 3-O-{[beta-D-GalNAc-(1-&gt;4)-beta-D-GlcA-(1-&gt;3)](n+1)-beta-D-GalNAc-(1-&gt;4)-beta-D-GlcA-(1-&gt;3)-beta-D-Gal-(1-&gt;3)-beta-D-Gal-(1-&gt;4)-beta-D-Xyl}-L-seryl-[protein] + UDP + H(+). It carries out the reaction 3-O-(beta-D-GalNAc-(1-&gt;4)-beta-D-GlcA-(1-&gt;3)-beta-D-Gal-(1-&gt;3)-beta-D-Gal-(1-&gt;4)-beta-D-Xyl)-L-seryl-[protein] + UDP-alpha-D-glucuronate = 3-O-(beta-D-GlcA-(1-&gt;3)-beta-D-GalNAc-(1-&gt;4)-beta-D-GlcA-(1-&gt;3)-beta-D-Gal-(1-&gt;3)-beta-D-Gal-(1-&gt;4)-beta-D-Xyl)-L-seryl-[protein] + UDP + H(+). The catalysed reaction is 3-O-{[beta-D-GalNAc-(1-&gt;4)-beta-D-GlcA-(1-&gt;3)](n)-beta-D-GalNAc-(1-&gt;4)-beta-D-GlcA-(1-&gt;3)-beta-D-Gal-(1-&gt;3)-beta-D-Gal-(1-&gt;4)-beta-D-Xyl}-L-seryl-[protein] + UDP-alpha-D-glucuronate = 3-O-{beta-D-GlcA-(1-&gt;3)-[beta-D-GalNAc-(1-&gt;4)-beta-D-GlcA-(1-&gt;3)](n)-beta-D-GalNAc-(1-&gt;4)-beta-D-GlcA-(1-&gt;3)-beta-D-Gal-(1-&gt;3)-beta-D-Gal-(1-&gt;4)-beta-D-Xyl}-L-seryl-[protein] + UDP + H(+). Has both beta-1,3-glucuronic acid and beta-1,4-N-acetylgalactosamine transferase activity. Transfers glucuronic acid (GlcUA) from UDP-GlcUA and N-acetylgalactosamine (GalNAc) from UDP-GalNAc to the non-reducing end of the elongating chondroitin polymer. Specific activity is much reduced compared to CHSY1. The chain is Chondroitin sulfate synthase 3 (Chsy3) from Mus musculus (Mouse).